The following is a 535-amino-acid chain: Major glycerophosphoinositol permease GIT3 (535 aa).

The chain crosses the membrane as a helical span at residues 49–69 (VVTSVKANSLWPAFASGAGLF). The N-linked (GlcNAc...) asparagine glycan is linked to N75. The next 5 helical transmembrane spans lie at 101-121 (NIASIAFVGTVVGQLGFGYIS), 137-157 (LIFFTLMCAVGSWGVTVQGFF), 165-185 (FFLGVAIGAEYPTSSVIASEF), 204-224 (AMIDSGFVVSAFVPFVLIWIF), and 232-252 (LWRVAIGLGVIPPLSLFFMRL). An N-linked (GlcNAc...) asparagine glycan is attached at N256. Transmembrane regions (helical) follow at residues 275–295 (WWLIVKFYWFRLTIVSLIWFI), 324–344 (WGWSIVFNLFYIPGAFLGAIS), 352–372 (LTLALGVGIQGVIGIAMSACL), 378–398 (HIAGFVVVFGIFTTFGEFGPG), 419–439 (GIAAAIGKIGAFVGTWVFPAI), and 455–475 (VPFYISSALCLFSACLAIFFC). N532 is a glycosylation site (N-linked (GlcNAc...) asparagine).

Belongs to the major facilitator superfamily. Sugar transporter (TC 2.A.1.1) family.

It is found in the cell membrane. It carries out the reaction sn-glycerol 3-phosphocholine(out) = sn-glycerol 3-phosphocholine(in). Glycerophosphodiester transporter that mediates uptake of glycerophosphocholine (GroPCho) with GIT4. GIT3 acts as the major GroPCho permease. Does not possess detectable glycerophosphoinositol (GroPIns) transport activity. The expanded ability to utilize GroPIns and GroPCho results from the organism's pathogenic nature and its need to occupy a variety of environments within its host organism. This possibility is buttressed by the fact that GroPIns and GroPCho are present and abundant in human fluids. This chain is Major glycerophosphoinositol permease GIT3, found in Candida albicans (strain SC5314 / ATCC MYA-2876) (Yeast).